A 249-amino-acid polypeptide reads, in one-letter code: 2,3-bisphosphoglycerate-dependent phosphoglycerate mutase (249 aa).

Substrate contacts are provided by residues 9–16, 22–23, Arg61, 88–91, Lys99, 115–116, and 184–185; these read RHGQSQWN, TG, ERHY, RR, and GN. The Tele-phosphohistidine intermediate role is filled by His10. The Proton donor/acceptor role is filled by Glu88.

Belongs to the phosphoglycerate mutase family. BPG-dependent PGAM subfamily. In terms of assembly, homodimer.

The catalysed reaction is (2R)-2-phosphoglycerate = (2R)-3-phosphoglycerate. Its pathway is carbohydrate degradation; glycolysis; pyruvate from D-glyceraldehyde 3-phosphate: step 3/5. Functionally, catalyzes the interconversion of 2-phosphoglycerate and 3-phosphoglycerate. In Xanthomonas campestris pv. campestris (strain 8004), this protein is 2,3-bisphosphoglycerate-dependent phosphoglycerate mutase.